The sequence spans 374 residues: Type IV secretion system protein PtlG homolog (374 aa).

A helical transmembrane segment spans residues 38–56 (WMFALVAVALSCLLATGIW). The interval 87 to 116 (PREPEPAPLPDMPAAPNPILPQPRPAPPVP) is disordered. Pro residues predominate over residues 92-116 (PAPLPDMPAAPNPILPQPRPAPPVP).

Belongs to the TrbI/VirB10 family.

Its subcellular location is the cell membrane. This chain is Type IV secretion system protein PtlG homolog (ptlG), found in Bordetella parapertussis (strain 12822 / ATCC BAA-587 / NCTC 13253).